Consider the following 142-residue polypeptide: Putative phosphatidylglycerol/phosphatidylinositol transfer protein 2 (142 aa).

Residues 1–20 (MKFYLYLSILLILLTSTSFG) form the signal peptide.

It belongs to the NPC2 family. Monomer.

Catalyzes the intermembrane transfer of phosphatidylglycerol and phosphatidylinositol. The sequence is that of Putative phosphatidylglycerol/phosphatidylinositol transfer protein 2 from Dictyostelium discoideum (Social amoeba).